A 199-amino-acid polypeptide reads, in one-letter code: Fe/S biogenesis protein NfuA (199 aa).

[4Fe-4S] cluster is bound by residues Cys151 and Cys154.

This sequence belongs to the NfuA family. As to quaternary structure, homodimer. It depends on [4Fe-4S] cluster as a cofactor.

In terms of biological role, involved in iron-sulfur cluster biogenesis. Binds a 4Fe-4S cluster, can transfer this cluster to apoproteins, and thereby intervenes in the maturation of Fe/S proteins. Could also act as a scaffold/chaperone for damaged Fe/S proteins. The chain is Fe/S biogenesis protein NfuA from Xylella fastidiosa (strain M23).